A 299-amino-acid polypeptide reads, in one-letter code: ATP phosphoribosyltransferase (299 aa).

The protein belongs to the ATP phosphoribosyltransferase family. Long subfamily. Mg(2+) is required as a cofactor.

It localises to the cytoplasm. It catalyses the reaction 1-(5-phospho-beta-D-ribosyl)-ATP + diphosphate = 5-phospho-alpha-D-ribose 1-diphosphate + ATP. Its pathway is amino-acid biosynthesis; L-histidine biosynthesis; L-histidine from 5-phospho-alpha-D-ribose 1-diphosphate: step 1/9. With respect to regulation, feedback inhibited by histidine. Catalyzes the condensation of ATP and 5-phosphoribose 1-diphosphate to form N'-(5'-phosphoribosyl)-ATP (PR-ATP). Has a crucial role in the pathway because the rate of histidine biosynthesis seems to be controlled primarily by regulation of HisG enzymatic activity. This chain is ATP phosphoribosyltransferase, found in Shewanella piezotolerans (strain WP3 / JCM 13877).